A 573-amino-acid chain; its full sequence is MQVAIGIVVVAIVIYAAVKGFQFYIDKQVRQLTERQQALVKQSQTTDFEKIEQLGLTGGSLAKLEALQSAGQEVDNDQLPAVSEQLTAITSQARGIRFLDAQQNLKKVAATLDTIEQRQAEIRQGLQALDDADAAHRQAVASLEKKYQNIRKTLLSQNFSFGPSIDKLEDQLANLESDFDHFSELAKAGDHDAAEKVLDQLHHDTGTLEMDIDRIPPIYKDLVSGFPDQLAELASGYQQLTAQHFHFEVESIEPEIKALQQAIDDNIALLGDLKVTDAENGNHAIEKRIDHLYDVMQAEIDAKAVVDQQQEEISKFLTHAMNQNHRLQIELDRLAQSYTLNNGEVERTRELNEQLKNIEAVYQADVTAITSKQAVFSEIAAHFAEQDEQLKGIEEEQVAINKGVASLTAEESKAHETLQRFDFEIHAIKRQVENLNLPGLPKDYLDYFKVVAKEIERLDHDINKLVINMDDITKQLIVIQADMATLKEKTSDLTDAAVMAEQLLQYANRYKTNHEEVQEASVEAQRLFTETHDYARSLEVIATAVDKVDPGSYKRIEDSYYANKQADKMNDEA.

At 1–2 the chain is on the extracellular side; the sequence is MQ. The chain crosses the membrane as a helical span at residues 3 to 21; that stretch reads VAIGIVVVAIVIYAAVKGF. Residues 22-573 lie on the Cytoplasmic side of the membrane; it reads QFYIDKQVRQ…KQADKMNDEA (552 aa). Coiled coils occupy residues 100–188, 317–364, and 416–488; these read DAQQ…LAKA, LTHA…VYQA, and ETLQ…TLKE.

This sequence belongs to the EzrA family.

It is found in the cell membrane. Functionally, negative regulator of FtsZ ring formation; modulates the frequency and position of FtsZ ring formation. Inhibits FtsZ ring formation at polar sites. Interacts either with FtsZ or with one of its binding partners to promote depolymerization. The polypeptide is Septation ring formation regulator EzrA (Lactiplantibacillus plantarum (strain ATCC BAA-793 / NCIMB 8826 / WCFS1) (Lactobacillus plantarum)).